We begin with the raw amino-acid sequence, 219 residues long: Rho-related protein racN (219 aa).

12–19 (GDVTIGKT) provides a ligand contact to GTP. The Effector region motif lies at 33–41 (YIPTIFDNH). GTP contacts are provided by residues 58-62 (DTGGG) and 114-117 (TKTD). Cysteine 216 is subject to Cysteine methyl ester. Cysteine 216 carries S-geranylgeranyl cysteine lipidation. Residues 217–219 (IIC) constitute a propeptide, removed in mature form.

Belongs to the small GTPase superfamily. Rho family.

It localises to the cell membrane. This Dictyostelium discoideum (Social amoeba) protein is Rho-related protein racN (racN).